Reading from the N-terminus, the 432-residue chain is Metacaspase-1 (432 aa).

Composition is skewed to low complexity over residues 1 to 14 and 29 to 59; these read MYPG…NNAG and QQYG…SQQY. A disordered region spans residues 1–70; it reads MYPGSGRYTY…PPPGPPPMAY (70 aa). Pro residues predominate over residues 60–70; it reads APPPGPPPMAY. Catalysis depends on residues H220 and C276.

This sequence belongs to the peptidase C14B family.

It is found in the cytoplasm. The protein resides in the nucleus. Mediates cell death (apoptosis) triggered by oxygen stress, salt stress or chronological aging. Regulated cell death can prevent a release of toxic cellular components, thus avoiding necrotic collapse of the colony, and can also provide nutrients for healthy cells. Therefore, regulated cell death in yeast colonies can be as important for their development as are apoptosis and related processes that occur within metazoa. This Saccharomyces cerevisiae (strain YJM789) (Baker's yeast) protein is Metacaspase-1 (MCA1).